We begin with the raw amino-acid sequence, 493 residues long: NAD(P)H dehydrogenase (quinone) (493 aa).

FAD is bound by residues 12–13, 35–37, 42–43, Lys52, Gly117, Asp317, 324–325, and Tyr450; these read PA, DCD, AA, and LA.

This sequence belongs to the class-I pyridine nucleotide-disulfide oxidoreductase family. In terms of assembly, homotetramer. The cofactor is FAD.

The enzyme catalyses a quinone + NADH + H(+) = a quinol + NAD(+). The catalysed reaction is a quinone + NADPH + H(+) = a quinol + NADP(+). Functionally, may contribute to virulence by increasing resistance to reactive oxygen intermediates. It can reduce 2,6-dimethyl-1,4-benzoquinone (DMBQ), 5-hydroxy-1,4-naphthaquinone (5-HNQ) and menadione. This chain is NAD(P)H dehydrogenase (quinone) (lpdA), found in Mycobacterium tuberculosis (strain CDC 1551 / Oshkosh).